The sequence spans 839 residues: Autophagy-related protein 9A (839 aa).

A disordered region spans residues 1 to 20; it reads MAQFDTEYQRLEASYSDSPP. Ala2 is subject to N-acetylalanine. At 2 to 61 the chain is on the cytoplasmic side; sequence AQFDTEYQRLEASYSDSPPGEEDLLVHVAEGSKSPWHHIENLDLFFSRVYNLHQKNGFTC. A Tyrosine-based sorting signal motif is present at residues 8–11; the sequence is YQRL. Ser14, Ser16, and Ser18 each carry phosphoserine. A helical membrane pass occupies residues 62–84; sequence MLIGEIFELMQFLFVVAFTTFLV. The Lumenal portion of the chain corresponds to 85 to 128; the sequence is SCVDYDILFANKMVNHSLHPTEPVKVTLPDAFLPAQVCSARIQE. Asn99 carries an N-linked (GlcNAc...) asparagine glycan. The chain crosses the membrane as a helical span at residues 129–154; it reads NGSLITILVIAGVFWIHRLIKFIYNI. The Cytoplasmic portion of the chain corresponds to 155–290; it reads CCYWEIHSFY…ELAQRLSNRI (136 aa). The stretch at 291–301 is an intramembrane region; that stretch reads LWIGIANFLLC. Over 302–319 the chain is Cytoplasmic; it reads PLILIWQILYAFFSYAEV. The stretch at 320–328 is an intramembrane region; sequence LKREPGALG. At 329–371 the chain is on the cytoplasmic side; the sequence is ARCWSLYGRCYLRHFNELEHELQSRLNRGYKPASKYMNCFLSP. The chain crosses the membrane as a helical span at residues 372-397; sequence LLTLLAKNGAFFAGSILAVLIALTIY. Topologically, residues 398 to 406 are lumenal; the sequence is DEDVLAVEH. A helical transmembrane segment spans residues 407-424; sequence VLTTVTLLGVTVTVCRSF. Residues 425–470 are Cytoplasmic-facing; the sequence is IPDQHMVFCPEQLLRVILAHIHYMPDHWQGNAHRSQTRDEFAQLFQ. The stretch at 471-480 is an intramembrane region; that stretch reads YKAVFILEEL. Over 481 to 483 the chain is Cytoplasmic; it reads LSP. Residues 484-492 lie within the membrane without spanning it; sequence IVTPLILIF. The Cytoplasmic segment spans residues 493–839; that stretch reads CLRPRALEII…DELPPQVHKV (347 aa). 5 positions are modified to phosphoserine: Ser656, Ser735, Ser738, Ser741, and Ser828. 2 disordered regions span residues 656 to 686 and 717 to 839; these read SPLQPGQAPTGRAHSTMTGSGVDARTASSGS and HKQQ…VHKV. The segment covering 724–736 has biased composition (basic and acidic residues); it reads EPERHVWHRRESD. Acidic residues-rich tracts occupy residues 737–747 and 823–832; these read ESGESAPDEGG and VPEEGSEDEL.

The protein belongs to the ATG9 family. In terms of assembly, homotrimer; forms a homotrimer with a central pore that forms a path between the two membrane leaflets. Interacts (via cytoplasmic its C-terminus) with ATG2A. Interacts with SUPT20H. Interacts (via the tyrosine-based sorting signal motif) with AP4M1; promoting association with the AP-4 complex. Interacts with ARFIP1 and ARFIP2. Interacts with PI4K2A and PI4KB. Interacts with ATG4A; the interaction is direct and promotes ATG9A trafficking. Ufmylated in a DDRGK1 dependent manner.

The protein resides in the preautophagosomal structure membrane. The protein localises to the cytoplasmic vesicle. It localises to the autophagosome membrane. Its subcellular location is the golgi apparatus. It is found in the trans-Golgi network membrane. The protein resides in the late endosome membrane. The protein localises to the recycling endosome membrane. It localises to the endoplasmic reticulum membrane. Its subcellular location is the mitochondrion membrane. It catalyses the reaction a 1,2-diacyl-sn-glycero-3-phosphocholine(in) = a 1,2-diacyl-sn-glycero-3-phosphocholine(out). The catalysed reaction is a 1,2-diacyl-sn-glycero-3-phospho-L-serine(in) = a 1,2-diacyl-sn-glycero-3-phospho-L-serine(out). It carries out the reaction a 1,2-diacyl-sn-glycero-3-phosphoethanolamine(in) = a 1,2-diacyl-sn-glycero-3-phosphoethanolamine(out). Its function is as follows. Phospholipid scramblase involved in autophagy by mediating autophagosomal membrane expansion. Cycles between the preautophagosomal structure/phagophore assembly site (PAS) and the cytoplasmic vesicle pool and supplies membrane for the growing autophagosome. Lipid scramblase activity plays a key role in preautophagosomal structure/phagophore assembly by distributing the phospholipids that arrive through ATG2 (ATG2A or ATG2B) from the cytoplasmic to the luminal leaflet of the bilayer, thereby driving autophagosomal membrane expansion. Also required to supply phosphatidylinositol 4-phosphate to the autophagosome initiation site by recruiting the phosphatidylinositol 4-kinase beta (PI4KB) in a process dependent on ARFIP2, but not ARFIP1. In addition to autophagy, also plays a role in necrotic cell death. This chain is Autophagy-related protein 9A, found in Homo sapiens (Human).